Reading from the N-terminus, the 236-residue chain is Phosphoribosylaminoimidazole-succinocarboxamide synthase (236 aa).

It belongs to the SAICAR synthetase family.

The enzyme catalyses 5-amino-1-(5-phospho-D-ribosyl)imidazole-4-carboxylate + L-aspartate + ATP = (2S)-2-[5-amino-1-(5-phospho-beta-D-ribosyl)imidazole-4-carboxamido]succinate + ADP + phosphate + 2 H(+). It participates in purine metabolism; IMP biosynthesis via de novo pathway; 5-amino-1-(5-phospho-D-ribosyl)imidazole-4-carboxamide from 5-amino-1-(5-phospho-D-ribosyl)imidazole-4-carboxylate: step 1/2. This is Phosphoribosylaminoimidazole-succinocarboxamide synthase from Campylobacter concisus (strain 13826).